A 1487-amino-acid chain; its full sequence is Major viral transcription factor (1487 aa).

Disordered stretches follow at residues 41 to 295, 310 to 370, and 803 to 1007; these read AAPD…LPPG, LAKT…AEEA, and PPTR…HTPR. A compositionally biased stretch (pro residues) spans 66-75; the sequence is VIPPPSPTPE. 2 stretches are compositionally biased toward low complexity: residues 165-193 and 201-213; these read PSSA…SSSS and DGAG…SSSS. Acidic residues predominate over residues 214–224; the sequence is DDSDSDEGGEE. Residues 235–272 are compositionally biased toward low complexity; that stretch reads AAKTPSAAGSPGPSSGGDRPAAGAATPKSCRSGAASPG. A compositionally biased stretch (pro residues) spans 273–285; sequence APAPAPASAPAPS. 3 stretches are compositionally biased toward low complexity: residues 807–829, 849–860, and 867–877; these read SQQP…AEGS, PSSHSQSPQHSQ, and ATTATCCRATQ. Over residues 878–893 the composition is skewed to polar residues; it reads TNARSRGQQHQPQKAR. Residues 920–929 show a composition bias toward basic residues; that stretch reads HGRPRGKSGK. The span at 938-951 shows a compositional bias: low complexity; sequence AAQAGASASFSSSA. Residues 988–1007 are compositionally biased toward basic and acidic residues; the sequence is GPDRRGGFRRVPRGDCHTPR.

This sequence belongs to the herpesviridae ICP4 family. In terms of processing, a long stretch of serine residues may be a major site of phosphorylation.

The protein resides in the host nucleus. This IE protein is a multifunctional protein capable of migrating to the nucleus, binding to DNA, trans-activating other viral genes, and autoregulating its own synthesis. The sequence is that of Major viral transcription factor (IE) from Equine herpesvirus 1 (strain Ab4p) (EHV-1).